The primary structure comprises 119 residues: Dihydroneopterin aldolase (119 aa).

Substrate-binding positions include Glu21, Tyr53, and 72–73 (IE). The Proton donor/acceptor role is filled by Lys99.

This sequence belongs to the DHNA family.

The enzyme catalyses 7,8-dihydroneopterin = 6-hydroxymethyl-7,8-dihydropterin + glycolaldehyde. The protein operates within cofactor biosynthesis; tetrahydrofolate biosynthesis; 2-amino-4-hydroxy-6-hydroxymethyl-7,8-dihydropteridine diphosphate from 7,8-dihydroneopterin triphosphate: step 3/4. In terms of biological role, catalyzes the conversion of 7,8-dihydroneopterin to 6-hydroxymethyl-7,8-dihydropterin. This chain is Dihydroneopterin aldolase (folB), found in Streptococcus pyogenes serotype M1.